The primary structure comprises 394 residues: Phosphopentomutase (394 aa).

Mn(2+) is bound by residues Asp-15, Asp-288, His-293, Asp-329, His-330, and His-341.

Belongs to the phosphopentomutase family. Mn(2+) is required as a cofactor.

The protein localises to the cytoplasm. It carries out the reaction 2-deoxy-alpha-D-ribose 1-phosphate = 2-deoxy-D-ribose 5-phosphate. The catalysed reaction is alpha-D-ribose 1-phosphate = D-ribose 5-phosphate. It functions in the pathway carbohydrate degradation; 2-deoxy-D-ribose 1-phosphate degradation; D-glyceraldehyde 3-phosphate and acetaldehyde from 2-deoxy-alpha-D-ribose 1-phosphate: step 1/2. Functionally, isomerase that catalyzes the conversion of deoxy-ribose 1-phosphate (dRib-1-P) and ribose 1-phosphate (Rib-1-P) to deoxy-ribose 5-phosphate (dRib-5-P) and ribose 5-phosphate (Rib-5-P), respectively. The polypeptide is Phosphopentomutase (Bacillus pumilus (strain SAFR-032)).